The following is a 30-amino-acid chain: rRNA N-glycosylase (30 aa).

This sequence belongs to the ribosome-inactivating protein family. Type 1 RIP subfamily. Expressed in seeds.

The catalysed reaction is Endohydrolysis of the N-glycosidic bond at one specific adenosine on the 28S rRNA.. Functionally, exhibits N-glycosylase activity. Catalyzes the release of one adenine from a ribosome. Acts as a ribosome-inactivating protein and inhibits protein synthesis in a rabbit-reticulocyte lysate system and in various cell lines (in vitro). The protein is rRNA N-glycosylase of Saponaria ocymoides (Rock soapwort).